The primary structure comprises 475 residues: Flotillin-like protein 4 (475 aa).

2 coiled-coil regions span residues glutamate 235–alanine 255 and glutamine 305–glutamate 325.

It belongs to the band 7/mec-2 family. Flotillin subfamily. As to expression, expressed in roots and nodules. Primarily expressed in vascular tissues. Upon induction of nodulation, expansion of expression in the root cortex in the region of elongating root hairs, which will eventually become colonized by bacteria. Expressed in the infection zone in nodules.

The protein resides in the membrane. Its subcellular location is the caveola. It is found in the cell membrane. May act as a scaffolding protein within caveolar membranes, functionally participating in formation of caveolae or caveolae-like vesicles. Required for normal infection threads initiation and elongation and nodulation. Probably involved in polar growth of the infection thread. This is Flotillin-like protein 4 (FLOT4) from Medicago truncatula (Barrel medic).